The sequence spans 217 residues: Small ribosomal subunit protein uS5 (217 aa).

Residues 49–112 (LEEKVLDVKL…AQAKKNIIRV (64 aa)) enclose the S5 DRBM domain.

This sequence belongs to the universal ribosomal protein uS5 family. Part of the 30S ribosomal subunit. Contacts protein S4.

Functionally, with S4 and S12 plays an important role in translational accuracy. The chain is Small ribosomal subunit protein uS5 from Methanocaldococcus jannaschii (strain ATCC 43067 / DSM 2661 / JAL-1 / JCM 10045 / NBRC 100440) (Methanococcus jannaschii).